A 325-amino-acid polypeptide reads, in one-letter code: Phospho-N-acetylmuramoyl-pentapeptide-transferase (325 aa).

A run of 10 helical transmembrane segments spans residues 9 to 29, 53 to 73, 77 to 97, 112 to 132, 154 to 174, 182 to 202, 204 to 224, 231 to 251, 257 to 277, and 305 to 325; these read ALLV…PWLL, TMGG…FQAF, TLLL…DDYL, KLLG…AFLG, LGNV…ANAV, GLCS…SLAL, EKGL…FLVY, VFMG…FAVL, FLLL…IQVI, and KIVL…GYGL.

It belongs to the glycosyltransferase 4 family. MraY subfamily. Mg(2+) serves as cofactor.

It localises to the cell membrane. The enzyme catalyses UDP-N-acetyl-alpha-D-muramoyl-L-alanyl-gamma-D-glutamyl-meso-2,6-diaminopimeloyl-D-alanyl-D-alanine + di-trans,octa-cis-undecaprenyl phosphate = di-trans,octa-cis-undecaprenyl diphospho-N-acetyl-alpha-D-muramoyl-L-alanyl-D-glutamyl-meso-2,6-diaminopimeloyl-D-alanyl-D-alanine + UMP. The protein operates within cell wall biogenesis; peptidoglycan biosynthesis. Its function is as follows. Catalyzes the initial step of the lipid cycle reactions in the biosynthesis of the cell wall peptidoglycan: transfers peptidoglycan precursor phospho-MurNAc-pentapeptide from UDP-MurNAc-pentapeptide onto the lipid carrier undecaprenyl phosphate, yielding undecaprenyl-pyrophosphoryl-MurNAc-pentapeptide, known as lipid I. The polypeptide is Phospho-N-acetylmuramoyl-pentapeptide-transferase (Carboxydothermus hydrogenoformans (strain ATCC BAA-161 / DSM 6008 / Z-2901)).